The primary structure comprises 302 residues: N-acetyl-D-glucosamine kinase (302 aa).

ATP contacts are provided by residues 4 to 11 (GFDIGGTK) and 133 to 139 (GGGGLVL). Residues H156, C176, C178, and C183 each contribute to the Zn(2+) site.

This sequence belongs to the ROK (NagC/XylR) family. NagK subfamily.

The enzyme catalyses N-acetyl-D-glucosamine + ATP = N-acetyl-D-glucosamine 6-phosphate + ADP + H(+). Its pathway is cell wall biogenesis; peptidoglycan recycling. Catalyzes the phosphorylation of N-acetyl-D-glucosamine (GlcNAc) derived from cell-wall degradation, yielding GlcNAc-6-P. The chain is N-acetyl-D-glucosamine kinase from Salmonella typhi.